The chain runs to 341 residues: Ribosomal RNA small subunit methyltransferase H (341 aa).

Residues 47-49 (GGY), D64, F91, D109, and Q116 each bind S-adenosyl-L-methionine.

This sequence belongs to the methyltransferase superfamily. RsmH family.

It is found in the cytoplasm. The enzyme catalyses cytidine(1402) in 16S rRNA + S-adenosyl-L-methionine = N(4)-methylcytidine(1402) in 16S rRNA + S-adenosyl-L-homocysteine + H(+). In terms of biological role, specifically methylates the N4 position of cytidine in position 1402 (C1402) of 16S rRNA. The protein is Ribosomal RNA small subunit methyltransferase H of Rhizobium leguminosarum bv. trifolii (strain WSM1325).